Consider the following 87-residue polypeptide: U3-theraphotoxin-Hhn1h (87 aa).

Residues 1-24 (MVNMKASMFLTFAGLVLLFVVCYA) form the signal peptide. Residues 25-52 (SESEEKEFPKEMLSSIFAVDNDSKQEER) constitute a propeptide that is removed on maturation. 3 cysteine pairs are disulfide-bonded: Cys-54-Cys-67, Cys-61-Cys-72, and Cys-66-Cys-79.

Belongs to the neurotoxin 10 (Hwtx-1) family. 51 (Hntx-8) subfamily. Hntx-8 sub-subfamily. Expressed by the venom gland.

It is found in the secreted. Functionally, ion channel inhibitor. The sequence is that of U3-theraphotoxin-Hhn1h from Cyriopagopus hainanus (Chinese bird spider).